A 7785-amino-acid chain; its full sequence is Probable non-canonical nonribosomal peptide synthetase (NRPS) CymA (7785 aa).

Carrier domains lie at 487–562, 1908–1983, and 2958–3033; these read TARS…QRQE, HART…SEQQ, and SPGM…LEGG. O-(pantetheine 4'-phosphoryl)serine is present on residues serine 522, serine 1943, and serine 2993. The LRR 1 repeat unit spans residues 3088–3111; the sequence is RLALADVVVRHEALRTVFAERAGN. Carrier domains are found at residues 3978–4053, 5002–5077, and 6389–6464; these read APRT…SEQQ, EPRT…LEAN, and GPRD…AQGS. O-(pantetheine 4'-phosphoryl)serine occurs at positions 4013, 5037, and 6424. An LRR 2 repeat occupies 6853–6875; it reads TGVSRVDLSVNAIETFDDHGLPA. In terms of domain architecture, Carrier 7 spans 7432–7507; sequence GPRTPQEEIL…QLAEQLGSDG (76 aa). An O-(pantetheine 4'-phosphoryl)serine modification is found at serine 7467.

Pantetheine 4'-phosphate is required as a cofactor.

Probable non-canonical nonribosomal peptide synthetase (NRPS); part of the gene cluster that mediates the biosynthesis of cyclic heptapeptides, known as cyclomarins and also of cyclic dipeptides, called cyclomarazines, which have both antimicrobial and cytotoxic effects. First, CymD catalyzes the reverse N-prenylation of monomeric L-tryptophan with dimethylallyl diphosphate (DMAPP) to form N-(1,1-dimethylallyl)-tryptophan (r-N-DMAT). The N-(1,1-dimethylallyl)-tryptophan produced by CymD is then combined with a range of standard and nonproteinogenic amino acid substrates to synthesize the peptides, a process that is probably catalyzed by the non-canonical nonribosomal peptide synthetase (NRPS), CymA. Other proteins in the cluster catalyze further modifications of the peptides including CymV which catalyzes the oxidation of olefinic cyclomarins and cyclomarazines to their respective epoxide derivatives. The protein is Probable non-canonical nonribosomal peptide synthetase (NRPS) CymA of Salinispora arenicola (strain CNS-205).